Here is a 601-residue protein sequence, read N- to C-terminus: Glutamyl-tRNA(Gln) amidotransferase subunit B, mitochondrial (601 aa).

The transit peptide at 1–52 (MLQQWLRQSPGAARFLRGSCCRGPQSGSLRHSPLPTAPHRCIRSLQTSATES) directs the protein to the mitochondrion.

The protein belongs to the GatB/GatE family. GatB subfamily. In terms of assembly, subunit of the heterotrimeric GatCAB amidotransferase (AdT) complex, composed of A, B and C subunits.

Its subcellular location is the mitochondrion. It catalyses the reaction L-glutamyl-tRNA(Gln) + L-glutamine + ATP + H2O = L-glutaminyl-tRNA(Gln) + L-glutamate + ADP + phosphate + H(+). Its function is as follows. Allows the formation of correctly charged Gln-tRNA(Gln) through the transamidation of misacylated Glu-tRNA(Gln) in the mitochondria. The reaction takes place in the presence of glutamine and ATP through an activated gamma-phospho-Glu-tRNA(Gln). This chain is Glutamyl-tRNA(Gln) amidotransferase subunit B, mitochondrial, found in Neosartorya fischeri (strain ATCC 1020 / DSM 3700 / CBS 544.65 / FGSC A1164 / JCM 1740 / NRRL 181 / WB 181) (Aspergillus fischerianus).